The chain runs to 864 residues: MHERYVPADVEAAAQGDWRAADAYKTKEDSQKPKFYCVSMLPYPSGKLHMGHVRNYTINDVMYRYLRMNGYNTLMPMGWDAFGMPAENAAMANGVPPAKWTYDNIDYMKGQMQSMGLAIDWSREIATCKPDYYKWNQWLFLKMLEKGIAYKKTGTVNWDPVDQTVLANEQVIDGRGWRSGALVEKREIPMYYLRITQYADELLNDLDGLGWPERVKIMQQNWIGKSFGVNFGFPYELDGEQKLLRVFTTRADTIMGVTFCAIAAEHPLATRLAQDKPELLAFIEECKRGGVAEADVATMEKKGVATGFSVKHPLTGEPVEVWIGNYVLMSYGEGAVMGVPGHDERDFAFAKKYDLPIKQVIASEGQTYSLDAWQEWYGDKETAVCVNSGKYDGLRYAEAVDAVAADLKAGGFGDKQVTWRLRDWGVSRQRYWGTPIPIIHCPSCGDVPVPEQDLPVVLPEDLVPDGTGNPLAKSEAFLNCTCPTCGAAAKRETDTMDTFVDSSWYFSRYTAPDAETMVDARTDYWMPMDQYIGGIEHAILHLLYSRFWTKVMRDLGLVKFGEPAKNLLTQGMVLNETYYREDAAGKKTWYNPLDVTVTHDDKGRPVGATLNADGQPVVLGGIEKMSKSKNNGVDPQLLIDQYGADTARLFTMFAAPPEQQLEWSGAGVEGASRFLRRVWSFGYGNREALAARAGFDAATLGDADKALRREIYSVLKQADFDYQRLQYNTVVSAAMKMLNAIDGAKGATPAVLRETYGVLLRVLYPVVPHVTFELWKALGYADEFGPLLDAPWPKVDEAALEQAEIELVLQVNGKVRGALKVAKDASRDAIEAAAVADEAFAKFSDGKPAKKIVVVPGRLVNIVV.

Positions 42–52 match the 'HIGH' region motif; the sequence is PYPSGKLHMGH. Positions 624-628 match the 'KMSKS' region motif; that stretch reads KMSKS. An ATP-binding site is contributed by Lys627.

The protein belongs to the class-I aminoacyl-tRNA synthetase family.

The protein resides in the cytoplasm. It carries out the reaction tRNA(Leu) + L-leucine + ATP = L-leucyl-tRNA(Leu) + AMP + diphosphate. This chain is Leucine--tRNA ligase, found in Burkholderia cenocepacia (strain ATCC BAA-245 / DSM 16553 / LMG 16656 / NCTC 13227 / J2315 / CF5610) (Burkholderia cepacia (strain J2315)).